The sequence spans 189 residues: MPTYKLIVGLGNLGKKYEKTRHNAGFMVLDRLASLFHLNFDKTNKLGDYLFIKEKAAILAKPATFMNNSGLFVKWLQDHFQIPLANIMIVHDEIAFDLGVIRLKMQGSANNHNGIKSVIRHLDTEQFNRLRFGIKSQNTSNILHEQVMSEFQNSELTKLEVAITKSVELLKRYIEGEELQRLMEYYHHG.

Tyrosine 17 is a binding site for tRNA. Histidine 22 acts as the Proton acceptor in catalysis. Residues phenylalanine 65, asparagine 67, and asparagine 113 each contribute to the tRNA site.

Belongs to the PTH family. In terms of assembly, monomer.

It localises to the cytoplasm. It carries out the reaction an N-acyl-L-alpha-aminoacyl-tRNA + H2O = an N-acyl-L-amino acid + a tRNA + H(+). Hydrolyzes ribosome-free peptidyl-tRNAs (with 1 or more amino acids incorporated), which drop off the ribosome during protein synthesis, or as a result of ribosome stalling. Its function is as follows. Catalyzes the release of premature peptidyl moieties from peptidyl-tRNA molecules trapped in stalled 50S ribosomal subunits, and thus maintains levels of free tRNAs and 50S ribosomes. In Mycoplasma genitalium (strain ATCC 33530 / DSM 19775 / NCTC 10195 / G37) (Mycoplasmoides genitalium), this protein is Peptidyl-tRNA hydrolase.